The following is a 98-amino-acid chain: NADH-ubiquinone oxidoreductase chain 4L (98 aa).

Transmembrane regions (helical) follow at residues M1–M21, S29–L49, and I61–V81.

The protein belongs to the complex I subunit 4L family. In terms of assembly, core subunit of respiratory chain NADH dehydrogenase (Complex I) which is composed of 45 different subunits.

Its subcellular location is the mitochondrion inner membrane. The catalysed reaction is a ubiquinone + NADH + 5 H(+)(in) = a ubiquinol + NAD(+) + 4 H(+)(out). Functionally, core subunit of the mitochondrial membrane respiratory chain NADH dehydrogenase (Complex I) which catalyzes electron transfer from NADH through the respiratory chain, using ubiquinone as an electron acceptor. Part of the enzyme membrane arm which is embedded in the lipid bilayer and involved in proton translocation. The polypeptide is NADH-ubiquinone oxidoreductase chain 4L (MT-ND4L) (Ectophylla alba (White bat)).